The following is a 150-amino-acid chain: Spore germination protein GerT (150 aa).

It localises to the spore coat. Its function is as follows. Involved in spore germination. The chain is Spore germination protein GerT (gerT) from Bacillus licheniformis (strain ATCC 14580 / DSM 13 / JCM 2505 / CCUG 7422 / NBRC 12200 / NCIMB 9375 / NCTC 10341 / NRRL NRS-1264 / Gibson 46).